A 160-amino-acid polypeptide reads, in one-letter code: MSEPKQYVMTYEGVKKLEGELEYLKTVKRKEITEKIKVALGYGDLSENSEYDEAKNDQAFTEGKILQLENKLKNAVVVDESEIPKDIVSVGSKVKVKDYDFDEEVEYSIVGSAEADPMSFKISNESPVGNALVGKKIGDVVEVVVPDGVSKFEILDIKRG.

Residues 49 to 75 (SEYDEAKNDQAFTEGKILQLENKLKNA) adopt a coiled-coil conformation.

It belongs to the GreA/GreB family.

In terms of biological role, necessary for efficient RNA polymerase transcription elongation past template-encoded arresting sites. The arresting sites in DNA have the property of trapping a certain fraction of elongating RNA polymerases that pass through, resulting in locked ternary complexes. Cleavage of the nascent transcript by cleavage factors such as GreA or GreB allows the resumption of elongation from the new 3'terminus. GreA releases sequences of 2 to 3 nucleotides. In Clostridium botulinum (strain Eklund 17B / Type B), this protein is Transcription elongation factor GreA.